A 53-amino-acid chain; its full sequence is GIDPNYRSLPVVKEEQGVKIYGTYEPPTKLGIWGTIVGVDFDLCIADGSCINA.

An N-terminal extension region spans residues 1-35; sequence GIDPNYRSLPVVKEEQGVKIYGTYEPPTKLGIWGT. The residue at position 29 (Lys29) is an N6-methyllysine. The 4Fe-4S ferredoxin-type 1 domain maps to 34–53; it reads GTIVGVDFDLCIADGSCINA. [3Fe-4S] cluster-binding residues include Cys44 and Cys50.

It depends on [3Fe-4S] cluster as a cofactor. The cofactor is [4Fe-4S] cluster.

Its function is as follows. Ferredoxins are iron-sulfur proteins that transfer electrons in a wide variety of metabolic reactions. This chain is Ferredoxin B, found in Sulfuracidifex metallicus (Sulfolobus metallicus).